The primary structure comprises 281 residues: Aspartate/glutamate leucyltransferase (281 aa).

The protein belongs to the R-transferase family. Bpt subfamily.

The protein resides in the cytoplasm. It carries out the reaction N-terminal L-glutamyl-[protein] + L-leucyl-tRNA(Leu) = N-terminal L-leucyl-L-glutamyl-[protein] + tRNA(Leu) + H(+). The enzyme catalyses N-terminal L-aspartyl-[protein] + L-leucyl-tRNA(Leu) = N-terminal L-leucyl-L-aspartyl-[protein] + tRNA(Leu) + H(+). Functionally, functions in the N-end rule pathway of protein degradation where it conjugates Leu from its aminoacyl-tRNA to the N-termini of proteins containing an N-terminal aspartate or glutamate. This Paracoccus denitrificans (strain Pd 1222) protein is Aspartate/glutamate leucyltransferase.